Reading from the N-terminus, the 593-residue chain is Serine/threonine-protein kinase PAK 4 (593 aa).

Residues 11–24 enclose the CRIB domain; it reads ISAPSNFEHRVHTG. Residues 25-322 are linker; sequence FDQHEQKFTG…VVDPGDPRSY (298 aa). Phosphoserine is present on S41. K78 carries the N6-methyllysine modification. Residues 95–303 are disordered; that stretch reads TRSNSLRRES…PQREPQRVSH (209 aa). At S104 the chain carries Phosphoserine. The span at 118–133 shows a compositional bias: basic and acidic residues; it reads LEERAAPARMAPDKAG. S148 carries the post-translational modification Phosphoserine. Residues 149–164 are compositionally biased toward basic and acidic residues; the sequence is GDRRRVGPEKRPKSSR. S181 is modified (phosphoserine). Positions 184-197 are enriched in polar residues; it reads DVSTPQPGSLTSGT. The residue at position 187 (T187) is a Phosphothreonine. Phosphoserine is present on S195. At T207 the chain carries Phosphothreonine. Over residues 238-258 the composition is skewed to low complexity; that stretch reads AAPQSSSSSRPPTRARGAPSP. Phosphoserine occurs at positions 257 and 266. A compositionally biased stretch (low complexity) spans 267–280; it reads EPQLAPPARALAAP. Positions 281–292 are enriched in pro residues; that stretch reads AVPPAPGPPGPR. Phosphoserine is present on S293. Over residues 294–303 the composition is skewed to basic and acidic residues; the sequence is PQREPQRVSH. The 252-residue stretch at 323-574 folds into the Protein kinase domain; that stretch reads LDNFIKIGEG…AAELLKHPFL (252 aa). ATP-binding positions include 329 to 337 and K352; that span reads IGEGSTGIV. The Proton acceptor role is filled by D442. S476 carries the phosphoserine; by autocatalysis modification.

This sequence belongs to the protein kinase superfamily. STE Ser/Thr protein kinase family. STE20 subfamily. Interacts tightly with GTP-bound but not GDP-bound CDC42/p21 and weakly with RAC1. Interacts with FGFR2 and GRB2. Interacts with INKA1. Interacts with SH3RF2. Interacts with RHOU and PAXI; the PAK4-RHOU complex protects RHOU from ubiquitination and acts as a scaffold to suppport paxillin/PAXI phosphorylation. Post-translationally, autophosphorylated on serine residues when activated by CDC42/p21. Phosphorylated on tyrosine residues upon stimulation of FGFR2. Methylated by SETD6. Polyubiquitinated, leading to its proteasomal degradation.

The protein resides in the cytoplasm. The enzyme catalyses L-seryl-[protein] + ATP = O-phospho-L-seryl-[protein] + ADP + H(+). The catalysed reaction is L-threonyl-[protein] + ATP = O-phospho-L-threonyl-[protein] + ADP + H(+). With respect to regulation, inhibited by INKA1; which inhibits the serine/threonine-protein kinase activity by binding PAK4 in a substrate-like manner. Its function is as follows. Serine/threonine protein kinase that plays a role in a variety of different signaling pathways including cytoskeleton regulation, cell migration, growth, proliferation or cell survival. Activation by various effectors including growth factor receptors or active CDC42 and RAC1 results in a conformational change and a subsequent autophosphorylation on several serine and/or threonine residues. Phosphorylates and inactivates the protein phosphatase SSH1, leading to increased inhibitory phosphorylation of the actin binding/depolymerizing factor cofilin. Decreased cofilin activity may lead to stabilization of actin filaments. Phosphorylates LIMK1, a kinase that also inhibits the activity of cofilin. Phosphorylates integrin beta5/ITGB5 and thus regulates cell motility. Phosphorylates ARHGEF2 and activates the downstream target RHOA that plays a role in the regulation of assembly of focal adhesions and actin stress fibers. Stimulates cell survival by phosphorylating the BCL2 antagonist of cell death BAD. Alternatively, inhibits apoptosis by preventing caspase-8 binding to death domain receptors in a kinase independent manner. Plays a role in cell-cycle progression by controlling levels of the cell-cycle regulatory protein CDKN1A and by phosphorylating RAN. Promotes kinase-independent stabilization of RHOU, thereby contributing to focal adhesion disassembly during cell migration. The protein is Serine/threonine-protein kinase PAK 4 of Mus musculus (Mouse).